Here is a 128-residue protein sequence, read N- to C-terminus: NADH-quinone oxidoreductase subunit A (128 aa).

The next 3 membrane-spanning stretches (helical) occupy residues 12–32 (FAIF…LSFL), 66–86 (FYLI…LYAW), and 96–116 (LGFY…VYLV).

The protein belongs to the complex I subunit 3 family. As to quaternary structure, NDH-1 is composed of 14 different subunits. Subunits NuoA, H, J, K, L, M, N constitute the membrane sector of the complex.

It localises to the cell membrane. The catalysed reaction is a quinone + NADH + 5 H(+)(in) = a quinol + NAD(+) + 4 H(+)(out). In terms of biological role, NDH-1 shuttles electrons from NADH, via FMN and iron-sulfur (Fe-S) centers, to quinones in the respiratory chain. The immediate electron acceptor for the enzyme in this species is believed to be ubiquinone. Couples the redox reaction to proton translocation (for every two electrons transferred, four hydrogen ions are translocated across the cytoplasmic membrane), and thus conserves the redox energy in a proton gradient. The polypeptide is NADH-quinone oxidoreductase subunit A (Baumannia cicadellinicola subsp. Homalodisca coagulata).